Here is a 103-residue protein sequence, read N- to C-terminus: Large ribosomal subunit protein bL21 (103 aa).

The protein belongs to the bacterial ribosomal protein bL21 family. In terms of assembly, part of the 50S ribosomal subunit. Contacts protein L20.

In terms of biological role, this protein binds to 23S rRNA in the presence of protein L20. The chain is Large ribosomal subunit protein bL21 from Amoebophilus asiaticus (strain 5a2).